The primary structure comprises 191 residues: Large ribosomal subunit protein uL29m (191 aa).

It belongs to the universal ribosomal protein uL29 family. Component of the mitochondrial large ribosomal subunit. Mature mitochondrial ribosomes consist of a small (37S) and a large (54S) subunit. The 37S subunit contains at least 33 different proteins and 1 molecule of RNA (15S). The 54S subunit contains at least 45 different proteins and 1 molecule of RNA (21S).

The protein localises to the mitochondrion. This Sclerotinia sclerotiorum (strain ATCC 18683 / 1980 / Ss-1) (White mold) protein is Large ribosomal subunit protein uL29m (MRPL4).